The following is a 221-amino-acid chain: ATP-dependent dethiobiotin synthetase BioD (221 aa).

11–16 (DIGKTL) serves as a coordination point for ATP. Mg(2+) is bound at residue Thr-15. Residue Lys-35 is part of the active site. Residue Thr-39 participates in substrate binding. ATP contacts are provided by residues Asp-44 and 103 to 106 (EGAG). 2 residues coordinate Mg(2+): Asp-44 and Glu-103.

It belongs to the dethiobiotin synthetase family. Homodimer. It depends on Mg(2+) as a cofactor.

The protein localises to the cytoplasm. The catalysed reaction is (7R,8S)-7,8-diammoniononanoate + CO2 + ATP = (4R,5S)-dethiobiotin + ADP + phosphate + 3 H(+). The protein operates within cofactor biosynthesis; biotin biosynthesis; biotin from 7,8-diaminononanoate: step 1/2. Functionally, catalyzes a mechanistically unusual reaction, the ATP-dependent insertion of CO2 between the N7 and N8 nitrogen atoms of 7,8-diaminopelargonic acid (DAPA, also called 7,8-diammoniononanoate) to form a ureido ring. The polypeptide is ATP-dependent dethiobiotin synthetase BioD (Leptospira borgpetersenii serovar Hardjo-bovis (strain L550)).